A 98-amino-acid chain; its full sequence is uncharacterized protein (98 aa).

The protein belongs to the CFAP97 family.

This is an uncharacterized protein from Homo sapiens (Human).